The sequence spans 88 residues: UPF0237 protein SMU_72 (88 aa).

One can recognise an ACT domain in the interval 4–77 (IITVVGKDRT…ETLNVKINIQ (74 aa)).

The protein belongs to the UPF0237 family. As to quaternary structure, homodimer.

The sequence is that of UPF0237 protein SMU_72 from Streptococcus mutans serotype c (strain ATCC 700610 / UA159).